A 246-amino-acid polypeptide reads, in one-letter code: 14-3-3 protein beta/alpha (246 aa).

Met1 carries the post-translational modification N-acetylmethionine; in 14-3-3 protein beta/alpha; alternate. N-acetylmethionine is present on Met1. Position 2 is an N-acetylthreonine; in 14-3-3 protein beta/alpha, N-terminally processed (Thr2). Position 2 is a phosphothreonine (Thr2). Lys5 bears the N6-acetyllysine mark. Position 51 is an N6-acetyllysine; alternate (Lys51). A Glycyl lysine isopeptide (Lys-Gly) (interchain with G-Cter in SUMO2); alternate cross-link involves residue Lys51. Position 60 is a phosphoserine (Ser60). Lys70 carries the N6-acetyllysine modification. 2 positions are modified to 3'-nitrotyrosine: Tyr84 and Tyr106. The residue at position 117 (Lys117) is an N6-acetyllysine. Phosphoserine is present on residues Ser186 and Ser232.

Belongs to the 14-3-3 family. Homodimer. Interacts with SAMSN1 and PRKCE. Interacts with AKAP13. Interacts with SSH1 and TORC2/CRTC2. Interacts with ABL1; the interaction results in cytoplasmic location of ABL1 and inhibition of cABL-mediated apoptosis. Interacts with ROR2 (dimer); the interaction results in phosphorylation of YWHAB on tyrosine residues. Interacts with GAB2. Interacts with YAP1 (phosphorylated form). Interacts with the phosphorylated (by AKT1) form of SRPK2. Interacts with PKA-phosphorylated AANAT. Interacts with MYO1C. Interacts with SIRT2. Interacts with the 'Thr-369' phosphorylated form of DAPK2. Interacts with PI4KB, TBC1D22A and TBC1D22B. Interacts with the 'Ser-1134' and 'Ser-1161' phosphorylated form of SOS1. Interacts (via phosphorylated form) with YWHAB; this interaction occurs in a protein kinase AKT1-dependent manner. Interacts with SLITRK1. Interacts with SYNPO2 (phosphorylated form); YWHAB competes with ACTN2 for interaction with SYNPO2. Interacts with RIPOR2 (via phosphorylated form) isoform 2; this interaction occurs in a chemokine-dependent manner and does not compete for binding of RIPOR2 with RHOA nor blocks inhibition of RIPOR2-mediated RHOA activity. Interacts with MARK2 and MARK3. Interacts with TESK1; the interaction is dependent on the phosphorylation of TESK1 'Ser-437' and inhibits TESK1 kinase activity. Interacts with MEFV. Interacts with HDAC4. Interacts with ADAM22 (via C-terminus). In terms of assembly, (Microbial infection) Interacts with herpes simplex virus 1 protein UL46. As to quaternary structure, (Microbial infection) Probably interacts with Chlamydia trachomatis protein IncG. The alpha, brain-specific form differs from the beta form in being phosphorylated. Phosphorylated on Ser-60 by protein kinase C delta type catalytic subunit in a sphingosine-dependent fashion.

The protein resides in the cytoplasm. It localises to the melanosome. Its subcellular location is the vacuole membrane. Functionally, adapter protein implicated in the regulation of a large spectrum of both general and specialized signaling pathways. Binds to a large number of partners, usually by recognition of a phosphoserine or phosphothreonine motif. Binding generally results in the modulation of the activity of the binding partner. Negative regulator of osteogenesis. Blocks the nuclear translocation of the phosphorylated form (by AKT1) of SRPK2 and antagonizes its stimulatory effect on cyclin D1 expression resulting in blockage of neuronal apoptosis elicited by SRPK2. Negative regulator of signaling cascades that mediate activation of MAP kinases via AKAP13. This chain is 14-3-3 protein beta/alpha (YWHAB), found in Homo sapiens (Human).